A 164-amino-acid chain; its full sequence is Endoribonuclease YbeY (164 aa).

The Zn(2+) site is built by histidine 132, histidine 136, and histidine 142.

This sequence belongs to the endoribonuclease YbeY family. The cofactor is Zn(2+).

The protein resides in the cytoplasm. Its function is as follows. Single strand-specific metallo-endoribonuclease involved in late-stage 70S ribosome quality control and in maturation of the 3' terminus of the 16S rRNA. This is Endoribonuclease YbeY from Clostridium kluyveri (strain NBRC 12016).